Here is a 103-residue protein sequence, read N- to C-terminus: Insulin (103 aa).

A signal peptide spans 1–20; it reads IQSLPLLALLALSGPGTSHA. 3 cysteine pairs are disulfide-bonded: Cys-27-Cys-89, Cys-39-Cys-102, and Cys-88-Cys-93. Residues 53 to 80 constitute a propeptide, c peptide; it reads DAEHPLVNGPLHGEVGDLPFQQEEFEKV.

The protein belongs to the insulin family. Heterodimer of a B chain and an A chain linked by two disulfide bonds.

It is found in the secreted. Insulin decreases blood glucose concentration. It increases cell permeability to monosaccharides, amino acids and fatty acids. It accelerates glycolysis, the pentose phosphate cycle, and glycogen synthesis in liver. The chain is Insulin (INS) from Selasphorus rufus (Rufous hummingbird).